A 128-amino-acid chain; its full sequence is Small ribosomal subunit protein bS6 (128 aa).

The protein belongs to the bacterial ribosomal protein bS6 family.

Its function is as follows. Binds together with bS18 to 16S ribosomal RNA. In Acinetobacter baylyi (strain ATCC 33305 / BD413 / ADP1), this protein is Small ribosomal subunit protein bS6.